The sequence spans 385 residues: MGNWLLPESLADVLPAEARRIEELRRELLDLYRTYGFELVAPPLVEYIDSLLSGTGTDLNLRTCKLVDQLSGRTLGVRADMTPQVTRIDAHLLNRAGVTRLCYCGTVLHARPADLLSSRELLQIGAEIYGHAGFEADLEILSLVLDTVAAAGLRQPRLDLCHPGVVRAILDADPAAAAYAEDIVLLLREKDVPGLAELARRDGGIRADTAAALQRLPGLYGGPDVLQQARHDLPLLPGVAAALDALQAIIDAMPDVTLGVDLADIGGYGYHSGVTFALYAEGWHDALVSGGRYDDVSRAFGRARPATGFSLDLRKLARGLPPAGRARAVRAPWGQDAALAAAVRQLRRAGEIVVQALPGHQQSQDEFICDRELVLQDGAWTLRTL.

The protein belongs to the class-II aminoacyl-tRNA synthetase family. HisZ subfamily. In terms of assembly, heteromultimer composed of HisG and HisZ subunits.

Its subcellular location is the cytoplasm. The protein operates within amino-acid biosynthesis; L-histidine biosynthesis; L-histidine from 5-phospho-alpha-D-ribose 1-diphosphate: step 1/9. In terms of biological role, required for the first step of histidine biosynthesis. May allow the feedback regulation of ATP phosphoribosyltransferase activity by histidine. The sequence is that of ATP phosphoribosyltransferase regulatory subunit from Bordetella petrii (strain ATCC BAA-461 / DSM 12804 / CCUG 43448).